The sequence spans 189 residues: Ras-like protein 1 (189 aa).

Residue 10-17 (GAGGVGKS) participates in GTP binding. Residues 32–40 (YDPTIEDSY) carry the Effector region motif. Residues 57-61 (DTAGQ) and 116-119 (NKCD) each bind GTP. At Cys-186 the chain carries Cysteine methyl ester. Cys-186 is lipidated: S-geranylgeranyl cysteine. Residues 187 to 189 (KML) constitute a propeptide, removed in mature form.

It belongs to the small GTPase superfamily. Ras family.

It localises to the cell membrane. The catalysed reaction is GTP + H2O = GDP + phosphate + H(+). With respect to regulation, alternates between an inactive form bound to GDP and an active form bound to GTP. Activated by a guanine nucleotide-exchange factor (GEF) and inactivated by a GTPase-activating protein (GAP). Functionally, ras proteins bind GDP/GTP and possess intrinsic GTPase activity. Plays a role in eye development by regulating cell growth, survival of postmitotic ommatidial cells and differentiation of photoreceptor cells. During larval development, mediates Ptth/tor signaling leading to the production of ecdysone, a hormone required for the initiation of metamorphosis. In Drosophila virilis (Fruit fly), this protein is Ras-like protein 1.